The following is a 266-amino-acid chain: Indole-3-glycerol phosphate synthase (266 aa).

Belongs to the TrpC family.

The enzyme catalyses 1-(2-carboxyphenylamino)-1-deoxy-D-ribulose 5-phosphate + H(+) = (1S,2R)-1-C-(indol-3-yl)glycerol 3-phosphate + CO2 + H2O. It functions in the pathway amino-acid biosynthesis; L-tryptophan biosynthesis; L-tryptophan from chorismate: step 4/5. The chain is Indole-3-glycerol phosphate synthase from Opitutus terrae (strain DSM 11246 / JCM 15787 / PB90-1).